Here is a 142-residue protein sequence, read N- to C-terminus: MRNYDLSPLLRQWIGFDKLANALQNSGESQSFPPYNIEKSDDNHYRITLALAGFRQEDLDIQLEGTRLTVKGTPEQPENEPKWLHQGLVMQPFSLSFTLAENMEVSGATFTNGLLHIDLTRNEPETIAPQRIAINERSALNS.

In terms of domain architecture, sHSP spans 26-137; sequence SGESQSFPPY…APQRIAINER (112 aa).

This sequence belongs to the small heat shock protein (HSP20) family. In terms of assembly, homodimer. Forms homomultimers of about 100-150 subunits at optimal growth temperatures. Conformation changes to oligomers at high temperatures or high ionic concentrations. The decrease in size of the multimers is accompanied by an increase in chaperone activity.

The protein resides in the cytoplasm. Associates with aggregated proteins, together with IbpA, to stabilize and protect them from irreversible denaturation and extensive proteolysis during heat shock and oxidative stress. Aggregated proteins bound to the IbpAB complex are more efficiently refolded and reactivated by the ATP-dependent chaperone systems ClpB and DnaK/DnaJ/GrpE. Its activity is ATP-independent. The protein is Small heat shock protein IbpB of Salmonella newport (strain SL254).